Consider the following 288-residue polypeptide: MKKIKKAIIPAAGLGTRFLPATKAMPKEMLPILDKPTIQYIIEEAARAGIEDIIIVTGRHKRAIEDHFDSQKELEMVLKEKGKSELLEKVQYSTELANIFYVRQKEQKGLGHAISSARQFIGNEPFAVLLGDDIVESEVPAVKQLIDVYEETGHSVIGVQEVPEADTHRYGIIDPLTKNGRQYEVKKFVEKPAQGTAPSNLAIMGRYVLTPEIFDYLKTQKEGAGNEIQLTDAIERMNNDNQVYAYDFEGERYDVGEKLGFVKTTIEYALKDDSMREELTRFIKELGL.

Belongs to the UDPGP type 2 family.

It carries out the reaction alpha-D-glucose 1-phosphate + UTP + H(+) = UDP-alpha-D-glucose + diphosphate. It participates in glycolipid metabolism; diglucosyl-diacylglycerol biosynthesis. Catalyzes the formation of UDP-glucose from glucose-1-phosphate and UTP. This is an intermediate step in the biosynthesis of diglucosyl-diacylglycerol (Glc2-DAG), i.e. the predominant glycolipid found in the S.aureus membrane, which is also used as a membrane anchor for lipoteichoic acid (LTA). The polypeptide is UTP--glucose-1-phosphate uridylyltransferase (gtaB) (Staphylococcus aureus (strain MRSA252)).